Here is a 52-residue protein sequence, read N- to C-terminus: Large ribosomal subunit protein eL39 (52 aa).

This sequence belongs to the eukaryotic ribosomal protein eL39 family.

The polypeptide is Large ribosomal subunit protein eL39 (RPL39) (Tetrahymena thermophila (strain SB210)).